The primary structure comprises 172 residues: NADH-quinone oxidoreductase subunit B (172 aa).

[4Fe-4S] cluster is bound by residues C46, C47, C111, and C141.

It belongs to the complex I 20 kDa subunit family. In terms of assembly, NDH-1 is composed of 14 different subunits. Subunits NuoB, C, D, E, F, and G constitute the peripheral sector of the complex. [4Fe-4S] cluster serves as cofactor.

The protein localises to the cell membrane. It catalyses the reaction a quinone + NADH + 5 H(+)(in) = a quinol + NAD(+) + 4 H(+)(out). In terms of biological role, NDH-1 shuttles electrons from NADH, via FMN and iron-sulfur (Fe-S) centers, to quinones in the respiratory chain. The immediate electron acceptor for the enzyme in this species is believed to be a menaquinone. Couples the redox reaction to proton translocation (for every two electrons transferred, four hydrogen ions are translocated across the cytoplasmic membrane), and thus conserves the redox energy in a proton gradient. This Bacillus mycoides (strain KBAB4) (Bacillus weihenstephanensis) protein is NADH-quinone oxidoreductase subunit B.